The primary structure comprises 214 residues: Zinc finger protein 11 (214 aa).

The segment at 1-27 (MKRTHLASFSNRDKTQEEEGEDGNGDN) is disordered. The C2H2-type zinc-finger motif lies at 49-71 (YTCSFCRREFRSAQALGGHMNVH). Residues 72-79 (RRDRAKLR) carry the Nuclear localization signal motif. The interval 89–130 (HHHTPIANPNPNFSSSSSSSTTTAHLEPSLTNQRSKTTPFPS) is disordered. The span at 102–111 (SSSSSSSTTT) shows a compositional bias: low complexity. Over residues 117 to 128 (SLTNQRSKTTPF) the composition is skewed to polar residues.

As to expression, expressed in roots, stems, axillary buds and flowers.

It localises to the nucleus. In terms of biological role, probable transcription factor that may regulate cell division and growth. The sequence is that of Zinc finger protein 11 from Arabidopsis thaliana (Mouse-ear cress).